The sequence spans 106 residues: UPF0145 protein Nmul_A0734 (106 aa).

The protein belongs to the UPF0145 family.

The sequence is that of UPF0145 protein Nmul_A0734 from Nitrosospira multiformis (strain ATCC 25196 / NCIMB 11849 / C 71).